A 476-amino-acid chain; its full sequence is Argininosuccinate lyase (476 aa).

Positions M1–S17 are enriched in low complexity. Positions M1–M22 are disordered.

This sequence belongs to the lyase 1 family. Argininosuccinate lyase subfamily.

It localises to the cytoplasm. It carries out the reaction 2-(N(omega)-L-arginino)succinate = fumarate + L-arginine. It functions in the pathway amino-acid biosynthesis; L-arginine biosynthesis; L-arginine from L-ornithine and carbamoyl phosphate: step 3/3. The chain is Argininosuccinate lyase from Jannaschia sp. (strain CCS1).